The sequence spans 593 residues: Tectonic-1 (593 aa).

Positions 1-22 (MGSRGLPPLLLVLLNCYTSSST) are cleaved as a signal peptide. The interval 37–72 (KEDLNSTKATPTTLQPSLSPRTPGTPRAPERSGPRP) is disordered. The N-linked (GlcNAc...) asparagine glycan is linked to Asn-41. Residues 42–58 (STKATPTTLQPSLSPRT) are compositionally biased toward polar residues. N-linked (GlcNAc...) asparagine glycosylation occurs at Asn-303. Arg-486 is modified (omega-N-methylarginine). Asn-536 is a glycosylation site (N-linked (GlcNAc...) asparagine).

This sequence belongs to the tectonic family. Part of the tectonic-like complex (also named B9 complex).

Its subcellular location is the cytoplasm. It is found in the cytoskeleton. It localises to the cilium basal body. The protein localises to the secreted. Functionally, component of the tectonic-like complex, a complex localized at the transition zone of primary cilia and acting as a barrier that prevents diffusion of transmembrane proteins between the cilia and plasma membranes. Regulator of Hedgehog (Hh), required for both activation and inhibition of the Hh pathway in the patterning of the neural tube. During neural tube development, it is required for formation of the most ventral cell types and for full Hh pathway activation. Functions in Hh signal transduction to fully activate the pathway in the presence of high Hh levels and to repress the pathway in the absence of Hh signals. Modulates Hh signal transduction downstream of SMO and RAB23. The polypeptide is Tectonic-1 (Tctn1) (Mus musculus (Mouse)).